Here is a 333-residue protein sequence, read N- to C-terminus: Protoheme IX farnesyltransferase (333 aa).

8 helical membrane passes run 36–56 (LIPLLLATTLGGMALTEGWPL), 61–81 (LVCTLGGGALAAAAAGVLNCL), 107–127 (AAFAGAVSCALAAATLLVSGV), 130–150 (LAAGLSLLGLCSYVLLYTALL), 158–178 (IVIGGVAGAIPPLVGAAAATG), 186–206 (WLFALVMVWTPAHFWALALLL), 243–263 (FLGVWALPEGGLLYGLLLLPF), and 284–304 (AKGLFRWSILYLFGICLLLVF).

The protein belongs to the UbiA prenyltransferase family. Protoheme IX farnesyltransferase subfamily.

The protein localises to the cell inner membrane. The catalysed reaction is heme b + (2E,6E)-farnesyl diphosphate + H2O = Fe(II)-heme o + diphosphate. Its pathway is porphyrin-containing compound metabolism; heme O biosynthesis; heme O from protoheme: step 1/1. In terms of biological role, converts heme B (protoheme IX) to heme O by substitution of the vinyl group on carbon 2 of heme B porphyrin ring with a hydroxyethyl farnesyl side group. This is Protoheme IX farnesyltransferase from Synechococcus sp. (strain WH7803).